Consider the following 108-residue polypeptide: Putative lipid-binding protein AIR1B (108 aa).

The signal sequence occupies residues 1–23; the sequence is MAPRTSLALFVSLNLLFFTCTSA. Cystine bridges form between C28–C55, C35–C54, and C71–C107.

The protein belongs to the plant LTP family. PEARLI1 subfamily.

Its subcellular location is the secreted. This Arabidopsis thaliana (Mouse-ear cress) protein is Putative lipid-binding protein AIR1B (AIR1B).